The primary structure comprises 85 residues: Small ribosomal subunit protein bS20 (85 aa).

Residues 1-22 (MPQIKSAIKRVKTQNATNKRNA) form a disordered region. Polar residues predominate over residues 13 to 22 (TQNATNKRNA).

Belongs to the bacterial ribosomal protein bS20 family.

Its function is as follows. Binds directly to 16S ribosomal RNA. The polypeptide is Small ribosomal subunit protein bS20 (Lactobacillus acidophilus (strain ATCC 700396 / NCK56 / N2 / NCFM)).